Reading from the N-terminus, the 51-residue chain is Sperm protamine P1 (51 aa).

This sequence belongs to the protamine P1 family. Testis.

Its subcellular location is the nucleus. It is found in the chromosome. Functionally, protamines substitute for histones in the chromatin of sperm during the haploid phase of spermatogenesis. They compact sperm DNA into a highly condensed, stable and inactive complex. The polypeptide is Sperm protamine P1 (PRM1) (Trachypithecus johnii (Nilgiri langur)).